The following is an 86-amino-acid chain: Selenoprotein W (86 aa).

Positions 10 to 13 (CGGU) form a cross-link, cysteinyl-selenocysteine (Cys-Sec); redox-active. Sec-13 is a non-standard amino acid (selenocysteine).

The protein belongs to the SelWTH family. Selenoprotein W subfamily.

Its subcellular location is the cytoplasm. Functionally, plays a role as a glutathione (GSH)-dependent antioxidant. May be involved in a redox-related process. May play a role in the myopathies of selenium deficiency. This chain is Selenoprotein W, found in Danio rerio (Zebrafish).